A 383-amino-acid polypeptide reads, in one-letter code: Aurachin C monooxygenase/isomerase (383 aa).

FAD-binding positions include Gly15, Ser47, Val128, Asp285, and 295 to 299 (GQGGC).

The cofactor is FAD.

The catalysed reaction is aurachin C + NADH + O2 + H(+) = 4-hydroxy-2-methyl-3-oxo-4-[(2E,6E)-farnesyl]-3,4-dihydroquinoline 1-oxide + NAD(+) + H2O. The enzyme catalyses aurachin C + NADPH + O2 + H(+) = 4-hydroxy-2-methyl-3-oxo-4-[(2E,6E)-farnesyl]-3,4-dihydroquinoline 1-oxide + NADP(+) + H2O. It carries out the reaction aurachin C + NADH + O2 + H(+) = aurachin C epoxide + NAD(+) + H2O. It catalyses the reaction aurachin C + NADPH + O2 + H(+) = aurachin C epoxide + NADP(+) + H2O. The catalysed reaction is aurachin C epoxide = 2-hydroxy-1a-methyl-7a-[(2E,6E)-farnesyl]-1a,2-dihydrooxireno[2,3-b]quinolin-7(7aH)-one. The enzyme catalyses 2-hydroxy-1a-methyl-7a-[(2E,6E)-farnesyl]-1a,2-dihydrooxireno[2,3-b]quinolin-7(7aH)-one = 4-hydroxy-2-methyl-3-oxo-4-[(2E,6E)-farnesyl]-3,4-dihydroquinoline 1-oxide. Functionally, catalyzes the initial step in the conversion of aurachin C to aurachin B. Catalyzes the epoxidation of the C(2)-C(3) double bond of aurachin C, which is followed by a semipinacol rearrangement, causing migration of the farnesyl group from C(3) to C(4). Accepts both NADH and NADPH, but has a preference for NADH. The chain is Aurachin C monooxygenase/isomerase from Stigmatella aurantiaca.